We begin with the raw amino-acid sequence, 394 residues long: 3-amino-4-hydroxybenzoate 2-monooxygenase (394 aa).

2 residues coordinate FAD: A16 and R109. Residue Y214 is the Proton acceptor of the active site. D287 is a binding site for FAD.

The protein belongs to the 6-hydroxynicotinate 3-monooxygenase family. FAD serves as cofactor.

The enzyme catalyses 3-amino-4-hydroxybenzoate + NADPH + O2 + H(+) = 3-amino-2,4-dihydroxybenzoate + NADP(+) + H2O. It functions in the pathway antibiotic biosynthesis. Its function is as follows. Part of a gene cluster involved in the biosynthesis of cremeomycin, a light-sensitive o-diazoquinone with antibacterial and antiproliferative effects. Catalyzes the hydroxylation of 3-amino-4-hydroxybenzoate (3,4-AHBA) to 3-amino-2,4-dihydroxybenzoate (3,2,4-ADHBA). The polypeptide is 3-amino-4-hydroxybenzoate 2-monooxygenase (Streptomyces cremeus).